The sequence spans 611 residues: Pescadillo homolog (611 aa).

Residues 310–335 (VQMGDPDEASPGEEEQFVAHASKSAP) form a disordered region. The segment covering 314–325 (DPDEASPGEEEQ) has biased composition (acidic residues). The BRCT domain maps to 354 to 455 (PSSRLFAPYT…KILLEDTYAQ (102 aa)). Disordered stretches follow at residues 469 to 506 (YEGAYDPTAATNDADMDVETDGEEGEADASGDEKESNT) and 545 to 611 (VKKA…AGGK). Residues 482–498 (ADMDVETDGEEGEADAS) are compositionally biased toward acidic residues. Basic and acidic residues-rich tracts occupy residues 552-569 (KKPDTASKATEEAEKDMN) and 579-602 (KLYEKMKYSQQKKAAEKEKLEQRK). The stretch at 580-609 (LYEKMKYSQQKKAAEKEKLEQRKKQLQKAG) forms a coiled coil.

This sequence belongs to the pescadillo family. In terms of assembly, component of the NOP7 complex, composed of ERB1, NOP7 and YTM1. The complex is held together by ERB1, which interacts with NOP7 via its N-terminal domain and with YTM1 via a high-affinity interaction between the seven-bladed beta-propeller domains of the 2 proteins. The NOP7 complex associates with the 66S pre-ribosome.

It localises to the nucleus. Its subcellular location is the nucleolus. The protein resides in the nucleoplasm. Component of the NOP7 complex, which is required for maturation of the 25S and 5.8S ribosomal RNAs and formation of the 60S ribosome. The chain is Pescadillo homolog from Coprinopsis cinerea (strain Okayama-7 / 130 / ATCC MYA-4618 / FGSC 9003) (Inky cap fungus).